We begin with the raw amino-acid sequence, 212 residues long: MQLFHLCLIISCSCPTVQASKLCLGWLWGMDIDPYKEFGASVELLSFLPSDFFPSIRDLLDTASALYREALESPEHCSPHHTALRQAILCWGELMNLATWVGSNLEDPASRELVVSYVNVNMGLKIRQLLWFHISCLTFGRETVLEYLVSFGVWIRTPPAYRPPNAPILSTLPETTVVRRRGRSPRRRTPSPRRRRSQSPRRRRSQSRESQC.

The signal sequence occupies residues 1 to 19 (MQLFHLCLIISCSCPTVQA). The HBEAG stretch occupies residues 25–27 (GWL). A disordered region spans residues 165 to 212 (NAPILSTLPETTVVRRRGRSPRRRTPSPRRRRSQSPRRRRSQSRESQC). Over residues 178 to 205 (VRRRGRSPRRRTPSPRRRRSQSPRRRRS) the composition is skewed to basic residues. Residues 184–190 (SPRRRTP) form a 1; half-length repeat. The 3 X 8 AA repeats of S-P-R-R-R-R-S-Q stretch occupies residues 184–206 (SPRRRTPSPRRRRSQSPRRRRSQ). Positions 184 to 212 (SPRRRTPSPRRRRSQSPRRRRSQSRESQC) are excised as a propeptide. Tandem repeats lie at residues 191-198 (SPRRRRSQ) and 199-206 (SPRRRRSQ).

It belongs to the orthohepadnavirus precore antigen family. Homodimerizes. In terms of processing, phosphorylated. Cleaved by host furin.

It localises to the secreted. The protein resides in the host nucleus. In terms of biological role, may regulate immune response to the intracellular capsid in acting as a T-cell tolerogen, by having an immunoregulatory effect which prevents destruction of infected cells by cytotoxic T-cells. This immune regulation may predispose to chronicity during perinatal infections and prevent severe liver injury during adult infections. The protein is External core antigen of Hepatitis B virus genotype B2 (isolate Indonesia/pIDW420/1988) (HBV-B).